A 60-amino-acid polypeptide reads, in one-letter code: Small ribosomal subunit protein bS21 (60 aa).

Residues 39–60 (ETPQEKRKRKAVARRRQRTRRR) are disordered. The span at 44 to 60 (KRKRKAVARRRQRTRRR) shows a compositional bias: basic residues.

It belongs to the bacterial ribosomal protein bS21 family.

In Microcystis aeruginosa (strain NIES-843 / IAM M-2473), this protein is Small ribosomal subunit protein bS21.